We begin with the raw amino-acid sequence, 207 residues long: Large ribosomal subunit protein uL4 (207 aa).

The interval 59–78 (GSGKKPFKQKGTGQARQGCK) is disordered.

This sequence belongs to the universal ribosomal protein uL4 family. Part of the 50S ribosomal subunit.

Its function is as follows. One of the primary rRNA binding proteins, this protein initially binds near the 5'-end of the 23S rRNA. It is important during the early stages of 50S assembly. It makes multiple contacts with different domains of the 23S rRNA in the assembled 50S subunit and ribosome. Forms part of the polypeptide exit tunnel. The chain is Large ribosomal subunit protein uL4 from Geotalea daltonii (strain DSM 22248 / JCM 15807 / FRC-32) (Geobacter daltonii).